The following is a 113-amino-acid chain: Prefoldin subunit beta (113 aa).

This sequence belongs to the prefoldin subunit beta family. As to quaternary structure, heterohexamer of two alpha and four beta subunits.

The protein localises to the cytoplasm. Its function is as follows. Molecular chaperone capable of stabilizing a range of proteins. Seems to fulfill an ATP-independent, HSP70-like function in archaeal de novo protein folding. This chain is Prefoldin subunit beta, found in Methanococcus maripaludis (strain DSM 14266 / JCM 13030 / NBRC 101832 / S2 / LL).